The following is a 126-amino-acid chain: Alpha-1-purothionin (126 aa).

The first 16 residues, 1 to 16, serve as a signal peptide directing secretion; the sequence is CLLILGLVLEQLQVEG. 4 disulfides stabilise this stretch: Cys-19–Cys-55, Cys-20–Cys-47, Cys-28–Cys-45, and Cys-32–Cys-41. Residues 62 to 126 constitute a propeptide, acidic domain; that stretch reads LALESNSDEP…DAGLPSLDAY (65 aa).

Belongs to the plant thionin (TC 1.C.44) family. 4 C-C subfamily.

The protein localises to the secreted. Thionins are small plant proteins which are toxic to animal cells. They seem to exert their toxic effect at the level of the cell membrane. Their precise function is not known. The sequence is that of Alpha-1-purothionin (THI1.1) from Triticum aestivum (Wheat).